We begin with the raw amino-acid sequence, 303 residues long: Inosose dehydratase (303 aa).

This sequence belongs to the IolE/MocC family. Requires glutathione as cofactor. Co(2+) serves as cofactor. The cofactor is Mn(2+).

The catalysed reaction is scyllo-inosose = 3D-3,5/4-trihydroxycyclohexane-1,2-dione + H2O. It functions in the pathway polyol metabolism; myo-inositol degradation into acetyl-CoA; acetyl-CoA from myo-inositol: step 2/7. In terms of biological role, catalyzes the dehydration of inosose (2-keto-myo-inositol, 2KMI or 2,4,6/3,5-pentahydroxycyclohexanone) to 3D-(3,5/4)-trihydroxycyclohexane-1,2-dione (D-2,3-diketo-4-deoxy-epi-inositol). This chain is Inosose dehydratase, found in Halalkalibacterium halodurans (strain ATCC BAA-125 / DSM 18197 / FERM 7344 / JCM 9153 / C-125) (Bacillus halodurans).